The sequence spans 249 residues: Aspartate/glutamate leucyltransferase (249 aa).

It belongs to the R-transferase family. Bpt subfamily.

Its subcellular location is the cytoplasm. The catalysed reaction is N-terminal L-glutamyl-[protein] + L-leucyl-tRNA(Leu) = N-terminal L-leucyl-L-glutamyl-[protein] + tRNA(Leu) + H(+). The enzyme catalyses N-terminal L-aspartyl-[protein] + L-leucyl-tRNA(Leu) = N-terminal L-leucyl-L-aspartyl-[protein] + tRNA(Leu) + H(+). In terms of biological role, functions in the N-end rule pathway of protein degradation where it conjugates Leu from its aminoacyl-tRNA to the N-termini of proteins containing an N-terminal aspartate or glutamate. This is Aspartate/glutamate leucyltransferase from Azorhizobium caulinodans (strain ATCC 43989 / DSM 5975 / JCM 20966 / LMG 6465 / NBRC 14845 / NCIMB 13405 / ORS 571).